A 146-amino-acid chain; its full sequence is Ribosome-binding factor A (146 aa).

Over residues 122–134 (QQQFGSAEDVTSN) the composition is skewed to polar residues. Positions 122–146 (QQQFGSAEDVTSNDIDEADDTEGKA) are disordered. A compositionally biased stretch (acidic residues) spans 135–146 (DIDEADDTEGKA).

It belongs to the RbfA family. Monomer. Binds 30S ribosomal subunits, but not 50S ribosomal subunits or 70S ribosomes.

It localises to the cytoplasm. Functionally, one of several proteins that assist in the late maturation steps of the functional core of the 30S ribosomal subunit. Associates with free 30S ribosomal subunits (but not with 30S subunits that are part of 70S ribosomes or polysomes). Required for efficient processing of 16S rRNA. May interact with the 5'-terminal helix region of 16S rRNA. The protein is Ribosome-binding factor A of Shewanella sp. (strain ANA-3).